The primary structure comprises 383 residues: MRGGTSALLHALTFSGAVWMCTPAEALPIQKSVQLGSFDKVVPSREVVSESLAPSFAVTETHSSVQSPSKQETQLCAISSEGKPCRNRQLHTDNGYFIGASCPKSACCSKTMCGPGGCGEFCSSNWIFCSSSLIYHPDKSYGGDCSCEKQGHRCDKNAECVENLDAGGGVHCKCKDGFVGTGLTCSEDPCSKRGNAKCGPNGTCIVVDSVSYTCTCGDGETLVNLPEGGQGCKRTGCHAFRENCSPGRCIDDASHENGYTCECPTGYSREVTSKAEESCVEGVEVTLAEKCEKEFGISASSCKCDNGYSGSASATSHHGKGESGSEGSLSEKMNIVFKCPSGYHPRYHAHTVTCEKIKHFALDGAGNHDTTTYVARRRYPASL.

An N-terminal signal peptide occupies residues methionine 1–alanine 26. Positions leucine 27–glutamine 66 are cleaved as a propeptide — required for proper sorting to micronemes. The interval serine 67–cysteine 145 is lectin-like; required for the binding of host cells. Required for proper sorting to micronemes stretches follow at residues serine 146–proline 189, cysteine 190–glycine 236, and cysteine 237–lysine 290. In terms of domain architecture, EGF-like spans serine 186–glutamate 227. Disulfide bonds link cysteine 190–cysteine 204 and cysteine 198–cysteine 214. Asparagine 201 carries an N-linked (GlcNAc...) asparagine glycan. Residues glutamate 294 to histidine 359 form an involved in dimerization region.

In terms of assembly, homodimer; dimerization is likely required for host cell binding but not for trafficking to micronemes. In terms of processing, removal of the propeptide occurs in a post-medial-Golgi compartment. Removal of the propeptide is required for the host cell binding. The presence of propeptide does not affect dimerization. The presence of propeptide does not affect sorting to micronemes.

The protein resides in the cytoplasmic vesicle. It localises to the secretory vesicle. Its subcellular location is the microneme. The protein localises to the secreted. It is found in the golgi apparatus. The protein resides in the endoplasmic reticulum. Adhesin; can bind both the host cells and the parasites. May be involved in parasite invasion by acting as a bridge between the parasite and the host cell. Triggers innate immune responses in mouse macrophages via the TLR11/MyD88/NF-kappa-B pathway. Induces TNF/TNF-alpha secretion in mouse macrophages. Induces secretion of IL6 in mouse and human macrophages likely via different mechanisms. Up-regulates expression of NOS2/iNOS in mouse macrophages. Induces mouse macrophage polarization. In Toxoplasma gondii, this protein is Micronemal protein 3.